A 129-amino-acid chain; its full sequence is Iron-sulfur cluster assembly 1 homolog, mitochondrial (129 aa).

Residues 1-12 (MSASIARATVRA) constitute a mitochondrion transit peptide. Residues Cys-57, Cys-121, and Cys-123 each coordinate Fe cation.

This sequence belongs to the HesB/IscA family.

The protein resides in the mitochondrion. In terms of biological role, involved in the maturation of mitochondrial 4Fe-4S proteins functioning late in the iron-sulfur cluster assembly pathway. Probably involved in the binding of an intermediate of Fe/S cluster assembly. In Danio rerio (Zebrafish), this protein is Iron-sulfur cluster assembly 1 homolog, mitochondrial (isca1).